A 403-amino-acid polypeptide reads, in one-letter code: Lissencephaly-1 homolog 1 (403 aa).

One can recognise a LisH domain in the interval 7–38 (QRDELNQAIHQYLLISYQQSAQLFKTEAAVKD). Positions 51–87 (NSIVRLSKRVITLEQQVEQLNEQLAQAQAGKIQFNKS) form a coiled coil. WD repeat units lie at residues 103 to 142 (GHRAGVNCVAFHPQYQILGSASDDGSIKLWDYESGHFEKT), 145 to 184 (GHTSNVNCLAFDPTGKYICSASSDLSIKIWELKNHTCVKT), 187 to 226 (GHEHSVSTVQFSDHGDFILSASRDKNIKLWEVATGFCKKT), 229 to 270 (EHQE…HQLS), 271 to 327 (GHEH…NLFT), 330 to 369 (GHDNWVNGVSFHPDGVHMLSVSDDKTIRVWNLKEQKQKKK), and 373 to 403 (AHDKFILKCEINKFIFATCSVDQTIKLWLLS).

This sequence belongs to the WD repeat LIS1/nudF family.

Its subcellular location is the cytoplasm. The protein resides in the cytoskeleton. It localises to the microtubule organizing center. The protein localises to the centrosome. In terms of biological role, positively regulates the activity of the minus-end directed microtubule motor protein dynein. May enhance dynein-mediated microtubule sliding by targeting dynein to the microtubule plus end. Required for several dynein- and microtubule-dependent processes. This Paramecium tetraurelia protein is Lissencephaly-1 homolog 1.